The sequence spans 894 residues: Translation initiation factor IF-2 (894 aa).

A disordered region spans residues Ala47–Lys305. The span at Ser68–Val82 shows a compositional bias: polar residues. Basic and acidic residues-rich tracts occupy residues Val93 to Val159 and Asp166 to Asp219. A compositionally biased stretch (basic residues) spans Gly254–Asn269. The segment covering Lys270 to Ala283 has biased composition (basic and acidic residues). Residues Pro393–Lys562 form the tr-type G domain. The segment at Gly402 to Thr409 is G1. Position 402–409 (Gly402–Thr409) interacts with GTP. The G2 stretch occupies residues Gly427–His431. The interval Asp448–Gly451 is G3. GTP-binding positions include Asp448–His452 and Asn502–Asp505. The segment at Asn502 to Asp505 is G4. The interval Ser538–Lys540 is G5.

Belongs to the TRAFAC class translation factor GTPase superfamily. Classic translation factor GTPase family. IF-2 subfamily.

The protein resides in the cytoplasm. Functionally, one of the essential components for the initiation of protein synthesis. Protects formylmethionyl-tRNA from spontaneous hydrolysis and promotes its binding to the 30S ribosomal subunits. Also involved in the hydrolysis of GTP during the formation of the 70S ribosomal complex. This chain is Translation initiation factor IF-2, found in Citrobacter koseri (strain ATCC BAA-895 / CDC 4225-83 / SGSC4696).